A 287-amino-acid polypeptide reads, in one-letter code: tRNA pseudouridine synthase B (287 aa).

Residue aspartate 37 is the Nucleophile of the active site.

Belongs to the pseudouridine synthase TruB family. Type 1 subfamily.

The enzyme catalyses uridine(55) in tRNA = pseudouridine(55) in tRNA. Functionally, responsible for synthesis of pseudouridine from uracil-55 in the psi GC loop of transfer RNAs. The sequence is that of tRNA pseudouridine synthase B from Caldicellulosiruptor saccharolyticus (strain ATCC 43494 / DSM 8903 / Tp8T 6331).